The primary structure comprises 491 residues: ATP synthase subunit beta, chloroplastic (491 aa).

172 to 179 (GGAGVGKT) serves as a coordination point for ATP.

Belongs to the ATPase alpha/beta chains family. F-type ATPases have 2 components, CF(1) - the catalytic core - and CF(0) - the membrane proton channel. CF(1) has five subunits: alpha(3), beta(3), gamma(1), delta(1), epsilon(1). CF(0) has four main subunits: a(1), b(1), b'(1) and c(9-12).

It localises to the plastid. The protein localises to the chloroplast thylakoid membrane. The enzyme catalyses ATP + H2O + 4 H(+)(in) = ADP + phosphate + 5 H(+)(out). Its function is as follows. Produces ATP from ADP in the presence of a proton gradient across the membrane. The catalytic sites are hosted primarily by the beta subunits. In Pisum sativum (Garden pea), this protein is ATP synthase subunit beta, chloroplastic.